Reading from the N-terminus, the 291-residue chain is Bis(5'-nucleosyl)-tetraphosphatase, symmetrical (291 aa).

It belongs to the Ap4A hydrolase family.

The catalysed reaction is P(1),P(4)-bis(5'-adenosyl) tetraphosphate + H2O = 2 ADP + 2 H(+). Functionally, hydrolyzes diadenosine 5',5'''-P1,P4-tetraphosphate to yield ADP. This Pseudomonas syringae pv. syringae (strain B728a) protein is Bis(5'-nucleosyl)-tetraphosphatase, symmetrical.